The sequence spans 172 residues: Xanthine-guanine phosphoribosyltransferase (172 aa).

Residues Arg47–Gly48 and Asp106–Thr114 each bind 5-phospho-alpha-D-ribose 1-diphosphate. Residue Asp107 participates in Mg(2+) binding. Guanine is bound by residues Asp110 and Ile153. Positions 110 and 153 each coordinate xanthine. Residues Asp110–Thr114 and Trp152–Ile153 each bind GMP.

The protein belongs to the purine/pyrimidine phosphoribosyltransferase family. XGPT subfamily. As to quaternary structure, homotetramer. It depends on Mg(2+) as a cofactor.

The protein resides in the cell inner membrane. It carries out the reaction GMP + diphosphate = guanine + 5-phospho-alpha-D-ribose 1-diphosphate. It catalyses the reaction XMP + diphosphate = xanthine + 5-phospho-alpha-D-ribose 1-diphosphate. The catalysed reaction is IMP + diphosphate = hypoxanthine + 5-phospho-alpha-D-ribose 1-diphosphate. It functions in the pathway purine metabolism; GMP biosynthesis via salvage pathway; GMP from guanine: step 1/1. It participates in purine metabolism; XMP biosynthesis via salvage pathway; XMP from xanthine: step 1/1. Purine salvage pathway enzyme that catalyzes the transfer of the ribosyl-5-phosphate group from 5-phospho-alpha-D-ribose 1-diphosphate (PRPP) to the N9 position of the 6-oxopurines guanine and xanthine to form the corresponding ribonucleotides GMP (guanosine 5'-monophosphate) and XMP (xanthosine 5'-monophosphate), with the release of PPi. To a lesser extent, also acts on hypoxanthine. The protein is Xanthine-guanine phosphoribosyltransferase of Rhodopseudomonas palustris (strain BisB5).